The chain runs to 249 residues: NADH-quinone oxidoreductase subunit C (249 aa).

The protein belongs to the complex I 30 kDa subunit family. As to quaternary structure, NDH-1 is composed of 14 different subunits. Subunits NuoB, C, D, E, F, and G constitute the peripheral sector of the complex.

Its subcellular location is the cell inner membrane. It catalyses the reaction a quinone + NADH + 5 H(+)(in) = a quinol + NAD(+) + 4 H(+)(out). Functionally, NDH-1 shuttles electrons from NADH, via FMN and iron-sulfur (Fe-S) centers, to quinones in the respiratory chain. The immediate electron acceptor for the enzyme in this species is believed to be ubiquinone. Couples the redox reaction to proton translocation (for every two electrons transferred, four hydrogen ions are translocated across the cytoplasmic membrane), and thus conserves the redox energy in a proton gradient. The polypeptide is NADH-quinone oxidoreductase subunit C (Xylella fastidiosa (strain M12)).